The sequence spans 358 residues: MSALTIPAARRTLNNAPIIDAANGKTPTRTPVWFMRQAGRSLPEYKKVREGISMLDSCFMPELLAEITLQPVRRHDVDAAILFSDIVVPLRAAGVGVEIVAGRGPVLDAPVRSRGDVLNLPILEGNVPEVEQGIGIILDELSDSQALIGFAGAPFTLASYLVEGGPSKNHEKTKAMMHGDPETWHALMARLVPTIVNSLKSQIDAGIDAVQLFDSWAGFLTERDYTEFVLPYSTEILEEVGKYQLPRIHFGVGTGELLGAMSKAGSEVMGVDWRVPLDKAAERIAAVSGPKVLQGNLDPALLFAGRAPLTKEIERIKAEAQTAVDAGHATGHIFNLGHGVLPNTVAEDITEAVSIIHS.

Residues 36–40, Asp85, Tyr160, Ser215, and His338 contribute to the substrate site; that span reads RQAGR.

Belongs to the uroporphyrinogen decarboxylase family. In terms of assembly, homodimer.

Its subcellular location is the cytoplasm. The catalysed reaction is uroporphyrinogen III + 4 H(+) = coproporphyrinogen III + 4 CO2. It participates in porphyrin-containing compound metabolism; protoporphyrin-IX biosynthesis; coproporphyrinogen-III from 5-aminolevulinate: step 4/4. Catalyzes the decarboxylation of four acetate groups of uroporphyrinogen-III to yield coproporphyrinogen-III. The protein is Uroporphyrinogen decarboxylase of Corynebacterium glutamicum (strain ATCC 13032 / DSM 20300 / JCM 1318 / BCRC 11384 / CCUG 27702 / LMG 3730 / NBRC 12168 / NCIMB 10025 / NRRL B-2784 / 534).